Consider the following 258-residue polypeptide: Pimeloyl-[acyl-carrier protein] methyl ester esterase (258 aa).

Residues 17 to 241 (VYLIHGWGAN…KAAHAPFLSH (225 aa)) form the AB hydrolase-1 domain. Residues tryptophan 23, 83-84 (SL), and 145-149 (FLQLQ) each bind substrate. Serine 83 functions as the Nucleophile in the catalytic mechanism. Catalysis depends on residues aspartate 207 and histidine 235. Substrate is bound at residue histidine 235.

It belongs to the AB hydrolase superfamily. Carboxylesterase BioH family. In terms of assembly, monomer.

The protein localises to the cytoplasm. It carries out the reaction 6-carboxyhexanoyl-[ACP] methyl ester + H2O = 6-carboxyhexanoyl-[ACP] + methanol + H(+). It participates in cofactor biosynthesis; biotin biosynthesis. The physiological role of BioH is to remove the methyl group introduced by BioC when the pimeloyl moiety is complete. It allows to synthesize pimeloyl-ACP via the fatty acid synthetic pathway through the hydrolysis of the ester bonds of pimeloyl-ACP esters. The sequence is that of Pimeloyl-[acyl-carrier protein] methyl ester esterase from Neisseria meningitidis serogroup B (strain ATCC BAA-335 / MC58).